Reading from the N-terminus, the 233-residue chain is Small ribosomal subunit protein uS3 (233 aa).

A KH type-2 domain is found at 39–107 (VREFLKKRLG…PVHVNIEEVR (69 aa)). A disordered region spans residues 212-233 (VQATPAAPEKKMRKGARNAAAN).

The protein belongs to the universal ribosomal protein uS3 family. Part of the 30S ribosomal subunit. Forms a tight complex with proteins S10 and S14.

Its function is as follows. Binds the lower part of the 30S subunit head. Binds mRNA in the 70S ribosome, positioning it for translation. In Chromobacterium violaceum (strain ATCC 12472 / DSM 30191 / JCM 1249 / CCUG 213 / NBRC 12614 / NCIMB 9131 / NCTC 9757 / MK), this protein is Small ribosomal subunit protein uS3.